The primary structure comprises 198 residues: Leucyl/phenylalanyl-tRNA--protein transferase (198 aa).

The protein belongs to the L/F-transferase family.

The protein localises to the cytoplasm. It catalyses the reaction N-terminal L-lysyl-[protein] + L-leucyl-tRNA(Leu) = N-terminal L-leucyl-L-lysyl-[protein] + tRNA(Leu) + H(+). The catalysed reaction is N-terminal L-arginyl-[protein] + L-leucyl-tRNA(Leu) = N-terminal L-leucyl-L-arginyl-[protein] + tRNA(Leu) + H(+). It carries out the reaction L-phenylalanyl-tRNA(Phe) + an N-terminal L-alpha-aminoacyl-[protein] = an N-terminal L-phenylalanyl-L-alpha-aminoacyl-[protein] + tRNA(Phe). In terms of biological role, functions in the N-end rule pathway of protein degradation where it conjugates Leu, Phe and, less efficiently, Met from aminoacyl-tRNAs to the N-termini of proteins containing an N-terminal arginine or lysine. This chain is Leucyl/phenylalanyl-tRNA--protein transferase, found in Synechocystis sp. (strain ATCC 27184 / PCC 6803 / Kazusa).